Reading from the N-terminus, the 272-residue chain is Phosphate import ATP-binding protein PstB 1 (272 aa).

The 242-residue stretch at 26–267 (LEIRNLDLRY…PKKRKTEDYI (242 aa)) folds into the ABC transporter domain. 58–65 (GPSGCGKS) contacts ATP.

It belongs to the ABC transporter superfamily. Phosphate importer (TC 3.A.1.7) family. As to quaternary structure, the complex is composed of two ATP-binding proteins (PstB), two transmembrane proteins (PstC and PstA) and a solute-binding protein (PstS).

The protein resides in the cell inner membrane. The enzyme catalyses phosphate(out) + ATP + H2O = ADP + 2 phosphate(in) + H(+). Its function is as follows. Part of the ABC transporter complex PstSACB involved in phosphate import. Responsible for energy coupling to the transport system. The polypeptide is Phosphate import ATP-binding protein PstB 1 (Shewanella oneidensis (strain ATCC 700550 / JCM 31522 / CIP 106686 / LMG 19005 / NCIMB 14063 / MR-1)).